The chain runs to 310 residues: D-alanine--D-alanine ligase (310 aa).

The ATP-grasp domain maps to 105–301 (KQAFVSAGIL…FEELVERIIL (197 aa)). 133–186 (SFGLPLVVKPVQEGSSVGISIVKEESQLAAAVKLAFRHDDEILVEQFIKGQEVQ) lines the ATP pocket. Mg(2+)-binding residues include aspartate 254, glutamate 267, and asparagine 269.

This sequence belongs to the D-alanine--D-alanine ligase family. Mg(2+) serves as cofactor. It depends on Mn(2+) as a cofactor.

The protein resides in the cytoplasm. The catalysed reaction is 2 D-alanine + ATP = D-alanyl-D-alanine + ADP + phosphate + H(+). It participates in cell wall biogenesis; peptidoglycan biosynthesis. In terms of biological role, cell wall formation. In Pelobacter propionicus (strain DSM 2379 / NBRC 103807 / OttBd1), this protein is D-alanine--D-alanine ligase.